The following is a 1796-amino-acid chain: Y' element ATP-dependent helicase protein 1 copy 5 (1796 aa).

The disordered stretch occupies residues 743 to 767; the sequence is AGEAASSDHDQKISRVTRKRPREPK. The Helicase ATP-binding domain occupies 797–974; the sequence is EIYMADTPSV…LQRIGLTGLA (178 aa). 810–817 lines the ATP pocket; the sequence is APPGYGKT. Positions 1031 to 1180 constitute a Helicase C-terminal domain; that stretch reads KLLLALFEIE…EFYGLESKKG (150 aa). Disordered regions lie at residues 1254–1278 and 1294–1421; these read ANASTNATTNSSTNATTTASTNVRT and TTES…DINK. Residues 1294 to 1397 are compositionally biased toward low complexity; the sequence is TTESTNSSTN…ATTTESTNAS (104 aa). Basic and acidic residues predominate over residues 1398–1421; sequence AKEDANKDGNAEDNRFHPVTDINK.

It belongs to the helicase family. Yeast subtelomeric Y' repeat subfamily.

Functionally, catalyzes DNA unwinding and is involved in telomerase-independent telomere maintenance. The sequence is that of Y' element ATP-dependent helicase protein 1 copy 5 (YRF1-5) from Saccharomyces cerevisiae (strain ATCC 204508 / S288c) (Baker's yeast).